Reading from the N-terminus, the 285-residue chain is Probable endonuclease 4 (285 aa).

Residues His69, His109, Glu145, Asp179, His182, His216, Asp229, His231, and Glu261 each contribute to the Zn(2+) site.

Belongs to the AP endonuclease 2 family. It depends on Zn(2+) as a cofactor.

The catalysed reaction is Endonucleolytic cleavage to 5'-phosphooligonucleotide end-products.. In terms of biological role, endonuclease IV plays a role in DNA repair. It cleaves phosphodiester bonds at apurinic or apyrimidinic (AP) sites, generating a 3'-hydroxyl group and a 5'-terminal sugar phosphate. The protein is Probable endonuclease 4 of Escherichia coli (strain SMS-3-5 / SECEC).